A 468-amino-acid chain; its full sequence is Beta-amylase (468 aa).

Residues 1–36 (MTLYRSLWKKGCMLLLSLVLSLTAFIGSPSNTASAA) form the signal peptide. Substrate is bound at residue D76. Positions 83 and 87 each coordinate Ca(2+). Substrate is bound by residues H116 and D124. A disulfide bridge links C118 with C126. E170 is a Ca(2+) binding site. E198 (proton donor) is an active-site residue. Substrate-binding residues include K314, H319, and T357. E394 functions as the Proton acceptor in the catalytic mechanism. Residues 395 to 396 (NA) and R423 each bind substrate.

The protein belongs to the glycosyl hydrolase 14 family. Ca(2+) is required as a cofactor.

It catalyses the reaction Hydrolysis of (1-&gt;4)-alpha-D-glucosidic linkages in polysaccharides so as to remove successive maltose units from the non-reducing ends of the chains.. The protein is Beta-amylase of Cytobacillus firmus (Bacillus firmus).